The sequence spans 210 residues: Large ribosomal subunit protein bL25 (210 aa).

It belongs to the bacterial ribosomal protein bL25 family. CTC subfamily. Part of the 50S ribosomal subunit; part of the 5S rRNA/L5/L18/L25 subcomplex. Contacts the 5S rRNA. Binds to the 5S rRNA independently of L5 and L18.

This is one of the proteins that binds to the 5S RNA in the ribosome where it forms part of the central protuberance. In Frankia casuarinae (strain DSM 45818 / CECT 9043 / HFP020203 / CcI3), this protein is Large ribosomal subunit protein bL25.